Reading from the N-terminus, the 227-residue chain is DNA repair protein RecO (227 aa).

This sequence belongs to the RecO family.

In terms of biological role, involved in DNA repair and RecF pathway recombination. The protein is DNA repair protein RecO of Pseudomonas syringae pv. syringae (strain B728a).